A 26-amino-acid polypeptide reads, in one-letter code: Probable early E4 17 kDa protein (26 aa).

This Homo sapiens (Human) protein is Probable early E4 17 kDa protein.